The primary structure comprises 244 residues: Type III pantothenate kinase (244 aa).

Position 12-19 (12-19) interacts with ATP; the sequence is VVGNTHVR. Substrate contacts are provided by residues Tyr-79 and 83–86; that span reads GLDR. The active-site Proton acceptor is the Asp-85. Asp-105 is a binding site for K(+). Residue Thr-108 participates in ATP binding. Thr-163 contributes to the substrate binding site.

This sequence belongs to the type III pantothenate kinase family. Homodimer. The cofactor is NH4(+). Requires K(+) as cofactor.

It localises to the cytoplasm. It carries out the reaction (R)-pantothenate + ATP = (R)-4'-phosphopantothenate + ADP + H(+). It participates in cofactor biosynthesis; coenzyme A biosynthesis; CoA from (R)-pantothenate: step 1/5. Catalyzes the phosphorylation of pantothenate (Pan), the first step in CoA biosynthesis. The polypeptide is Type III pantothenate kinase (Synechococcus sp. (strain JA-3-3Ab) (Cyanobacteria bacterium Yellowstone A-Prime)).